Reading from the N-terminus, the 94-residue chain is Cell division protein FtsB (94 aa).

The Cytoplasmic segment spans residues 1 to 3; sequence MRV. A helical membrane pass occupies residues 4 to 21; the sequence is FALTLSLLLVWLLYTLMW. Topologically, residues 22 to 94 are periplasmic; it reads GKNGVMDFRA…YRIIGEESRQ (73 aa). Residues 33–76 adopt a coiled-coil conformation; that stretch reads QAEIEVQQQVNANLHLRNQEMFAEIDDLRQGLDAIEERARNELG.

It belongs to the FtsB family. Part of a complex composed of FtsB, FtsL and FtsQ.

It is found in the cell inner membrane. Functionally, essential cell division protein. May link together the upstream cell division proteins, which are predominantly cytoplasmic, with the downstream cell division proteins, which are predominantly periplasmic. This is Cell division protein FtsB from Vibrio cholerae serotype O1 (strain ATCC 39315 / El Tor Inaba N16961).